The primary structure comprises 62 residues: DNA gyrase inhibitor YacG (62 aa).

The Zn(2+) site is built by Cys8, Cys11, Cys27, and Cys31.

The protein belongs to the DNA gyrase inhibitor YacG family. In terms of assembly, interacts with GyrB. Zn(2+) serves as cofactor.

Functionally, inhibits all the catalytic activities of DNA gyrase by preventing its interaction with DNA. Acts by binding directly to the C-terminal domain of GyrB, which probably disrupts DNA binding by the gyrase. This chain is DNA gyrase inhibitor YacG, found in Actinobacillus pleuropneumoniae serotype 5b (strain L20).